Consider the following 73-residue polypeptide: Putative defensin-like protein 270 (73 aa).

Positions 1 to 23 (MMSSKSHFVALLLIIFLIVNVQS) are cleaved as a signal peptide. 4 disulfide bridges follow: Cys-33–Cys-72, Cys-39–Cys-60, Cys-45–Cys-70, and Cys-49–Cys-71.

This sequence belongs to the DEFL family.

It localises to the secreted. This chain is Putative defensin-like protein 270, found in Arabidopsis thaliana (Mouse-ear cress).